A 198-amino-acid polypeptide reads, in one-letter code: Recombination protein RecR (198 aa).

A C4-type zinc finger spans residues 57 to 72; sequence CSVCGHITDKDPCYIC. Positions 80-175 constitute a Toprim domain; it reads SVLCVVQESK…KVTRIAHGLP (96 aa).

Belongs to the RecR family.

May play a role in DNA repair. It seems to be involved in an RecBC-independent recombinational process of DNA repair. It may act with RecF and RecO. The chain is Recombination protein RecR from Listeria innocua serovar 6a (strain ATCC BAA-680 / CLIP 11262).